Consider the following 236-residue polypeptide: Phosphoribosylaminoimidazole-succinocarboxamide synthase (236 aa).

The protein belongs to the SAICAR synthetase family.

The catalysed reaction is 5-amino-1-(5-phospho-D-ribosyl)imidazole-4-carboxylate + L-aspartate + ATP = (2S)-2-[5-amino-1-(5-phospho-beta-D-ribosyl)imidazole-4-carboxamido]succinate + ADP + phosphate + 2 H(+). It functions in the pathway purine metabolism; IMP biosynthesis via de novo pathway; 5-amino-1-(5-phospho-D-ribosyl)imidazole-4-carboxamide from 5-amino-1-(5-phospho-D-ribosyl)imidazole-4-carboxylate: step 1/2. The protein is Phosphoribosylaminoimidazole-succinocarboxamide synthase of Rickettsia massiliae (strain Mtu5).